The sequence spans 210 residues: Claudin-4 (210 aa).

Residues M1 to Q7 lie on the Cytoplasmic side of the membrane. An interaction with EPHA2 region spans residues M1 to K103. The helical transmembrane segment at V8–P28 threads the bilayer. The Extracellular segment spans residues M29–R81. A disulfide bridge links C54 with C64. A helical membrane pass occupies residues A82 to G102. The Cytoplasmic segment spans residues K103 to K116. Residues I117–S137 traverse the membrane as a helical segment. Topologically, residues W138–M160 are extracellular. The chain crosses the membrane as a helical span at residues G161–L181. Residues C182 to V210 are Cytoplasmic-facing. Y209 is modified (phosphotyrosine; by EPHA2). The tract at residues Y209–V210 is interactions with TJP1, TJP2 and TJP3.

Belongs to the claudin family. In terms of assembly, can form heteropolymeric strands with other claudins. Interacts with CLDN8. Interacts with CLDN1. Directly interacts with TJP1/ZO-1, TJP2/ZO-2 and TJP3/ZO-3. Interacts with EPHA2; phosphorylates CLDN4 and may regulate tight junctions. Post-translationally, phosphorylated. Phosphorylation by EPHA2 is stimulated by EFNA1 and alters interaction with TJP1. Expressed primarily in lung and kidney. Present in both cortical and medullar collecting ducts (at protein level).

The protein localises to the cell junction. Its subcellular location is the tight junction. It localises to the cell membrane. It catalyses the reaction chloride(in) = chloride(out). The catalysed reaction is bromide(in) = bromide(out). It carries out the reaction iodide(out) = iodide(in). The enzyme catalyses fluoride(in) = fluoride(out). Its function is as follows. Can associate with other claudins to regulate tight junction structural and functional strand dynamics. May coassemble with CLDN8 into tight junction strands containing anion-selective channels that convey paracellular chloride permeability in renal collecting ducts. May integrate into CLDN3 strands to modulate localized tight junction barrier properties. May disrupt strand assembly of channel-forming CLDN2 and CLDN15 and inhibit cation conductance. Cannot form tight junction strands on its own. In Mus musculus (Mouse), this protein is Claudin-4.